Consider the following 1123-residue polypeptide: Leucine-rich repeat receptor-like protein kinase PEPR1 (1123 aa).

The first 28 residues, 1-28, serve as a signal peptide directing secretion; sequence MKNLGGLFKILLLFFCLFLSTHIISVSC. Residues 29–769 are Extracellular-facing; that stretch reads LNSDGLTLLS…SRKSGLSTWQ (741 aa). Residues 31 to 53 form an LRR 1 repeat; that stretch reads SDGLTLLSLLKHLDRVPPQVTST. Asparagine 57, asparagine 81, asparagine 110, and asparagine 121 each carry an N-linked (GlcNAc...) asparagine glycan. LRR repeat units lie at residues 74-98, 99-122, 124-145, 146-170, 171-194, 196-218, and 219-243; these read SKNV…IGEL, KSLQ…LGNC, KLAT…TLDS, LKRL…LFRI, PKLQ…IGDA, ELVE…IGNS, and SSLQ…NLLG. Residues asparagine 182 and asparagine 217 are each glycosylated (N-linked (GlcNAc...) asparagine). Asparagine 244, asparagine 252, asparagine 289, asparagine 302, asparagine 316, asparagine 321, and asparagine 337 each carry an N-linked (GlcNAc...) asparagine glycan. LRR repeat units follow at residues 245–266, 267–290, 292–314, 315–338, 340–362, 363–386, 388–410, 412–434, 435–458, 459–482, 484–505, 506–529, 530–553, 554–577, 579–600, 601–625, 626–650, 652–674, 675–696, and 697–721; these read LTTL…SPNC, KNLL…LGNC, SLDA…LGML, KNLT…LGNC, SLNL…LGKL, RKLE…IWKS, SLTQ…MTEM, KLKI…LGVN, SSLE…LCHG, RKLR…IGHC, TIRR…FSQD, HSLS…LGSC, KNLS…LGNL, QNLG…LSNC, SLER…NFSN, WKGL…LPEL, KKLS…GLIE, LIYD…LGDL, IKLT…VLKG, and LTSL…LEGQ. N-linked (GlcNAc...) asparagine glycans are attached at residues asparagine 398, asparagine 420, and asparagine 434. N-linked (GlcNAc...) asparagine glycosylation occurs at asparagine 494. 5 N-linked (GlcNAc...) asparagine glycosylation sites follow: asparagine 531, asparagine 536, asparagine 560, asparagine 591, and asparagine 597. Asparagine 681 and asparagine 686 each carry an N-linked (GlcNAc...) asparagine glycan. Asparagine 745 carries an N-linked (GlcNAc...) asparagine glycan. The chain crosses the membrane as a helical span at residues 770–790; sequence IVLIAVLSSLLVLVVVLALVF. Residues 791–1123 are Cytoplasmic-facing; it reads ICLRRRKGRP…ARSCSSDSVR (333 aa). Threonine 824 carries the post-translational modification Phosphothreonine. Residues 827-1115 enclose the Protein kinase domain; that stretch reads LNEKYTIGRG…LLEDVKHLAR (289 aa). Residues 833 to 841 and lysine 855 each bind ATP; that span reads IGRGAHGIV. 2 positions are modified to phosphotyrosine: tyrosine 901 and tyrosine 941. Aspartate 954 serves as the catalytic Proton acceptor. Position 995 is a phosphotyrosine (tyrosine 995).

The protein belongs to the protein kinase superfamily. Ser/Thr protein kinase family. In terms of assembly, interacts with PEP1 and BAK1. Interacts with BIK1 and PBL1. In terms of processing, N-glycosylated.

Its subcellular location is the cell membrane. The catalysed reaction is L-seryl-[protein] + ATP = O-phospho-L-seryl-[protein] + ADP + H(+). It catalyses the reaction L-threonyl-[protein] + ATP = O-phospho-L-threonyl-[protein] + ADP + H(+). Functionally, acts as a receptor for PEP defense peptides. Unlike typical immune receptors, senses an endogenous elicitor that potentiates pathogen-associated molecular pattern (PAMP)-inducible plant responses. Involved in PAMP-triggered immunity (PTI) signaling. Interacts with and phosphorylates the kinase BIK1, a central rate-limiting kinase in PTI signaling. The chain is Leucine-rich repeat receptor-like protein kinase PEPR1 (PEPR1) from Arabidopsis thaliana (Mouse-ear cress).